Consider the following 373-residue polypeptide: 3-dehydroquinate synthase (373 aa).

NAD(+) contacts are provided by residues 107-111, 131-132, lysine 144, and lysine 153; these read GVIGD and TS. Glutamate 186, histidine 249, and histidine 267 together coordinate Zn(2+).

It belongs to the sugar phosphate cyclases superfamily. Dehydroquinate synthase family. Requires Co(2+) as cofactor. Zn(2+) is required as a cofactor. NAD(+) serves as cofactor.

Its subcellular location is the cytoplasm. It catalyses the reaction 7-phospho-2-dehydro-3-deoxy-D-arabino-heptonate = 3-dehydroquinate + phosphate. It functions in the pathway metabolic intermediate biosynthesis; chorismate biosynthesis; chorismate from D-erythrose 4-phosphate and phosphoenolpyruvate: step 2/7. Catalyzes the conversion of 3-deoxy-D-arabino-heptulosonate 7-phosphate (DAHP) to dehydroquinate (DHQ). In Ruegeria sp. (strain TM1040) (Silicibacter sp.), this protein is 3-dehydroquinate synthase.